The primary structure comprises 691 residues: Elongation factor G (691 aa).

Residues 8–283 (KKVRNIGIAA…AVVAYLPAPD (276 aa)) form the tr-type G domain. GTP is bound by residues 17-24 (AHIDAGKT), 81-85 (DTPGH), and 135-138 (NKMD).

Belongs to the TRAFAC class translation factor GTPase superfamily. Classic translation factor GTPase family. EF-G/EF-2 subfamily.

The protein localises to the cytoplasm. Its function is as follows. Catalyzes the GTP-dependent ribosomal translocation step during translation elongation. During this step, the ribosome changes from the pre-translocational (PRE) to the post-translocational (POST) state as the newly formed A-site-bound peptidyl-tRNA and P-site-bound deacylated tRNA move to the P and E sites, respectively. Catalyzes the coordinated movement of the two tRNA molecules, the mRNA and conformational changes in the ribosome. This chain is Elongation factor G, found in Campylobacter jejuni subsp. doylei (strain ATCC BAA-1458 / RM4099 / 269.97).